The chain runs to 223 residues: MEVKDILKTVDHTLLATTATWPEIQTILDDAMAYETASACIPASYVKKAAEYVSGKLAICTVIGFPNGYSTTAAKVFECQDAIQNGADEIDMVINLTDVKNGDFDTVEEEIRQIKAKCQDHILKVIVETCQLTKEELIELCGVVTRSGADFIKTSTGFSTAGATFEDVEVMAKYVGEGVKIKAAGGISSLEDAKTFIALGASRLGTSRIIKIVKNEATKTDSY.

Asp-91 acts as the Proton donor/acceptor in catalysis. The Schiff-base intermediate with acetaldehyde role is filled by Lys-153. The active-site Proton donor/acceptor is Lys-182.

Belongs to the DeoC/FbaB aldolase family. DeoC type 1 subfamily.

It localises to the cytoplasm. It catalyses the reaction 2-deoxy-D-ribose 5-phosphate = D-glyceraldehyde 3-phosphate + acetaldehyde. Its pathway is carbohydrate degradation; 2-deoxy-D-ribose 1-phosphate degradation; D-glyceraldehyde 3-phosphate and acetaldehyde from 2-deoxy-alpha-D-ribose 1-phosphate: step 2/2. In terms of biological role, catalyzes a reversible aldol reaction between acetaldehyde and D-glyceraldehyde 3-phosphate to generate 2-deoxy-D-ribose 5-phosphate. The chain is Deoxyribose-phosphate aldolase from Streptococcus pyogenes serotype M1.